The primary structure comprises 222 residues: MGFFDLFGKKTAMVAPNEALPGRSATMPVPDKHFVNGNPLKAPFPQGMETALFGLGCFWGAERKFWQIPGVYSTAVGYAAGYTPNPTYQEVCTGMTGHNEVVLVAFDPQQVSYDQLLKVFWESHNPTQGMRQGNDVGTQYRSGIYTYSEAQQQAALASKQAYQQALQQAGYGEITTEILPAPDFYYAEDYHQQYLAKNPNGYCGLGGTNVACPIGTEVSLGA.

The active site involves Cys57.

It belongs to the MsrA Met sulfoxide reductase family.

The enzyme catalyses L-methionyl-[protein] + [thioredoxin]-disulfide + H2O = L-methionyl-(S)-S-oxide-[protein] + [thioredoxin]-dithiol. It carries out the reaction [thioredoxin]-disulfide + L-methionine + H2O = L-methionine (S)-S-oxide + [thioredoxin]-dithiol. In terms of biological role, has an important function as a repair enzyme for proteins that have been inactivated by oxidation. Catalyzes the reversible oxidation-reduction of methionine sulfoxide in proteins to methionine. In Synechocystis sp. (strain ATCC 27184 / PCC 6803 / Kazusa), this protein is Peptide methionine sulfoxide reductase MsrA 1 (msrA1).